Consider the following 90-residue polypeptide: Probable Fe(2+)-trafficking protein (90 aa).

This sequence belongs to the Fe(2+)-trafficking protein family.

Functionally, could be a mediator in iron transactions between iron acquisition and iron-requiring processes, such as synthesis and/or repair of Fe-S clusters in biosynthetic enzymes. The chain is Probable Fe(2+)-trafficking protein from Pseudomonas putida (strain ATCC 700007 / DSM 6899 / JCM 31910 / BCRC 17059 / LMG 24140 / F1).